Here is a 232-residue protein sequence, read N- to C-terminus: A-type ATP synthase subunit D (232 aa).

The disordered stretch occupies residues 200-232 (KKIKNKKEAEEEDEDEDESEMTDETVVQTPADD). A compositionally biased stretch (acidic residues) spans 209–222 (EEEDEDEDESEMTD).

Belongs to the V-ATPase D subunit family. Has multiple subunits with at least A(3), B(3), C, D, E, F, H, I and proteolipid K(x).

The protein resides in the cell membrane. Its function is as follows. Component of the A-type ATP synthase that produces ATP from ADP in the presence of a proton gradient across the membrane. The protein is A-type ATP synthase subunit D of Haloquadratum walsbyi (strain DSM 16790 / HBSQ001).